Here is a 977-residue protein sequence, read N- to C-terminus: Vacuolar membrane protease (977 aa).

Residues 1 to 17 (MARSRTAGRCNPFAFYR) lie on the Cytoplasmic side of the membrane. The helical transmembrane segment at 18–38 (VPVTVFVTLIYVALLAPIIVV) threads the bilayer. Over 39 to 383 (HHILPAVPES…AFAVFEIHTL (345 aa)) the chain is Vacuolar. N-linked (GlcNAc...) asparagine glycans are attached at residues Asn-113 and Asn-116. Positions 166 and 178 each coordinate Zn(2+). Catalysis depends on Glu-212, which acts as the Proton acceptor. Residues Glu-213, Glu-238, and His-311 each contribute to the Zn(2+) site. A helical membrane pass occupies residues 384–404 (FALSVTLLIVGPLTLFITSII). Residues 405 to 438 (LANQDRMYLFGISVPVDDGFGSVPLRGWRGFFRF) are Cytoplasmic-facing. A helical membrane pass occupies residues 439–459 (PFIFGSTTASVVALAYLMAKI). The Vacuolar portion of the chain corresponds to 460 to 469 (NPMIAHSSEY). Residues 470-490 (AVWSMMISAWVFVAWFLSRIA) form a helical membrane-spanning segment. The Cytoplasmic segment spans residues 491 to 500 (NFARPSALHR). Residues 501–521 (IYVLTWMFLLTWVLLVITTVY) traverse the membrane as a helical segment. At 522–525 (ENRD) the chain is on the vacuolar side. A helical membrane pass occupies residues 526 to 546 (GIASGYFVIFYAFGTFMATWI). Residues 547–659 (SYLELFSLPK…WSANLPKWTW (113 aa)) are Cytoplasmic-facing. Over residues 566–576 (GQISSRPTSLG) the composition is skewed to polar residues. Residues 566 to 604 (GQISSRPTSLGGSRLLTPSGESVGQHPEDEEPTESTSLL) form a disordered region. A helical transmembrane segment spans residues 660-680 (ILQFLLIAPIVIILIGQLGLL). The Vacuolar segment spans residues 681 to 696 (ITSAIHQTMQDGSSTL). Residues 697 to 717 (VPYLIIALLTTFLFMPTLPFI) traverse the membrane as a helical segment. The Cytoplasmic segment spans residues 718–726 (HRYTYHIPT). Residues 727 to 747 (FLFLIFVATLVYNLVAFPFSG) form a helical membrane-spanning segment. Residues 748–977 (NNRTKLFFLQ…LVKGSRSFEV (230 aa)) are Vacuolar-facing. N-linked (GlcNAc...) asparagine glycosylation is found at Asn-749 and Asn-791.

It belongs to the peptidase M28 family. The cofactor is Zn(2+).

It is found in the vacuole membrane. In terms of biological role, may be involved in vacuolar sorting and osmoregulation. In Talaromyces marneffei (strain ATCC 18224 / CBS 334.59 / QM 7333) (Penicillium marneffei), this protein is Vacuolar membrane protease.